We begin with the raw amino-acid sequence, 400 residues long: tRNA(Met) cytidine acetate ligase (400 aa).

Residues 7 to 20 (IVEY…HLYH), Gly-101, Asn-159, and 184 to 185 (RI) each bind ATP.

It belongs to the TmcAL family.

The protein localises to the cytoplasm. It catalyses the reaction cytidine(34) in elongator tRNA(Met) + acetate + ATP = N(4)-acetylcytidine(34) in elongator tRNA(Met) + AMP + diphosphate. In terms of biological role, catalyzes the formation of N(4)-acetylcytidine (ac(4)C) at the wobble position of elongator tRNA(Met), using acetate and ATP as substrates. First activates an acetate ion to form acetyladenylate (Ac-AMP) and then transfers the acetyl group to tRNA to form ac(4)C34. This Caldicellulosiruptor bescii (strain ATCC BAA-1888 / DSM 6725 / KCTC 15123 / Z-1320) (Anaerocellum thermophilum) protein is tRNA(Met) cytidine acetate ligase.